The chain runs to 176 residues: Large ribosomal subunit protein uL6 (176 aa).

It belongs to the universal ribosomal protein uL6 family. As to quaternary structure, part of the 50S ribosomal subunit.

Functionally, this protein binds to the 23S rRNA, and is important in its secondary structure. It is located near the subunit interface in the base of the L7/L12 stalk, and near the tRNA binding site of the peptidyltransferase center. This Lactobacillus gasseri (strain ATCC 33323 / DSM 20243 / BCRC 14619 / CIP 102991 / JCM 1131 / KCTC 3163 / NCIMB 11718 / NCTC 13722 / AM63) protein is Large ribosomal subunit protein uL6.